The primary structure comprises 337 residues: Heme A synthase (337 aa).

5 consecutive transmembrane segments (helical) span residues 6–26, 87–107, 119–139, 154–174, and 192–212; these read ITKW…IGGI, FIHR…LIYF, LPYI…WYMV, LAFH…QLIK, and LIFS…GALV. His-256 is a binding site for heme. 3 helical membrane-spanning segments follow: residues 258–278, 285–305, and 308–328; these read LVGY…LKIE, IAYF…ITLL, and VPII…SIII. His-316 provides a ligand contact to heme.

This sequence belongs to the COX15/CtaA family. Type 2 subfamily. In terms of assembly, interacts with CtaB. Heme b is required as a cofactor.

It localises to the cell membrane. The enzyme catalyses Fe(II)-heme o + 2 A + H2O = Fe(II)-heme a + 2 AH2. It functions in the pathway porphyrin-containing compound metabolism; heme A biosynthesis; heme A from heme O: step 1/1. Its function is as follows. Catalyzes the conversion of heme O to heme A by two successive hydroxylations of the methyl group at C8. The first hydroxylation forms heme I, the second hydroxylation results in an unstable dihydroxymethyl group, which spontaneously dehydrates, resulting in the formyl group of heme A. This is Heme A synthase from Rickettsia africae (strain ESF-5).